The sequence spans 309 residues: Homoserine O-succinyltransferase (309 aa).

The Acyl-thioester intermediate role is filled by Cys-142. Positions 163 and 192 each coordinate substrate. The active-site Proton acceptor is the His-235. The active site involves Glu-237. Position 249 (Arg-249) interacts with substrate.

It belongs to the MetA family. As to quaternary structure, homodimer.

The protein localises to the cytoplasm. The catalysed reaction is L-homoserine + succinyl-CoA = O-succinyl-L-homoserine + CoA. The protein operates within amino-acid biosynthesis; L-methionine biosynthesis via de novo pathway; O-succinyl-L-homoserine from L-homoserine: step 1/1. In terms of biological role, transfers a succinyl group from succinyl-CoA to L-homoserine, forming succinyl-L-homoserine. This Escherichia coli O17:K52:H18 (strain UMN026 / ExPEC) protein is Homoserine O-succinyltransferase.